The following is a 513-amino-acid chain: Gluconokinase (513 aa).

ATP-binding positions include K16, T261, G300, and 412–416; that span reads GFARS.

Belongs to the FGGY kinase family.

The catalysed reaction is D-gluconate + ATP = 6-phospho-D-gluconate + ADP + H(+). Its pathway is carbohydrate acid metabolism; D-gluconate degradation. Catabolite repression by gluconate. The protein is Gluconokinase (gntK) of Bacillus subtilis (strain 168).